We begin with the raw amino-acid sequence, 128 residues long: Small ribosomal subunit protein bS6 (128 aa).

Residues 100-128 (SPMAKAKEERFTRRDDERREEATEAASEE) form a disordered region. Basic and acidic residues predominate over residues 104–121 (KAKEERFTRRDDERREEA).

The protein belongs to the bacterial ribosomal protein bS6 family.

Its function is as follows. Binds together with bS18 to 16S ribosomal RNA. In Aeromonas hydrophila subsp. hydrophila (strain ATCC 7966 / DSM 30187 / BCRC 13018 / CCUG 14551 / JCM 1027 / KCTC 2358 / NCIMB 9240 / NCTC 8049), this protein is Small ribosomal subunit protein bS6.